Here is a 253-residue protein sequence, read N- to C-terminus: 3-deoxy-manno-octulosonate cytidylyltransferase (253 aa).

This sequence belongs to the KdsB family.

It localises to the cytoplasm. The enzyme catalyses 3-deoxy-alpha-D-manno-oct-2-ulosonate + CTP = CMP-3-deoxy-beta-D-manno-octulosonate + diphosphate. It participates in nucleotide-sugar biosynthesis; CMP-3-deoxy-D-manno-octulosonate biosynthesis; CMP-3-deoxy-D-manno-octulosonate from 3-deoxy-D-manno-octulosonate and CTP: step 1/1. The protein operates within bacterial outer membrane biogenesis; lipopolysaccharide biosynthesis. Functionally, activates KDO (a required 8-carbon sugar) for incorporation into bacterial lipopolysaccharide in Gram-negative bacteria. The polypeptide is 3-deoxy-manno-octulosonate cytidylyltransferase (Aeromonas hydrophila subsp. hydrophila (strain ATCC 7966 / DSM 30187 / BCRC 13018 / CCUG 14551 / JCM 1027 / KCTC 2358 / NCIMB 9240 / NCTC 8049)).